Consider the following 219-residue polypeptide: 7-cyano-7-deazaguanine synthase (219 aa).

10-20 (FSGGQDSTTCL) contacts ATP. Zn(2+) contacts are provided by Cys-188, Cys-196, Cys-199, and Cys-202.

This sequence belongs to the QueC family. Zn(2+) is required as a cofactor.

It catalyses the reaction 7-carboxy-7-deazaguanine + NH4(+) + ATP = 7-cyano-7-deazaguanine + ADP + phosphate + H2O + H(+). It participates in purine metabolism; 7-cyano-7-deazaguanine biosynthesis. In terms of biological role, catalyzes the ATP-dependent conversion of 7-carboxy-7-deazaguanine (CDG) to 7-cyano-7-deazaguanine (preQ(0)). The chain is 7-cyano-7-deazaguanine synthase from Neisseria meningitidis serogroup A / serotype 4A (strain DSM 15465 / Z2491).